The primary structure comprises 253 residues: Triosephosphate isomerase, cytosolic (253 aa).

Residues N10 and K12 each contribute to the substrate site. The Electrophile role is filled by H96. E166 acts as the Proton acceptor in catalysis.

This sequence belongs to the triosephosphate isomerase family. As to quaternary structure, homodimer.

It localises to the cytoplasm. It carries out the reaction D-glyceraldehyde 3-phosphate = dihydroxyacetone phosphate. It functions in the pathway carbohydrate biosynthesis; gluconeogenesis. Its pathway is carbohydrate degradation; glycolysis; D-glyceraldehyde 3-phosphate from glycerone phosphate: step 1/1. The sequence is that of Triosephosphate isomerase, cytosolic (TPI) from Oryza sativa subsp. japonica (Rice).